The chain runs to 469 residues: Solute carrier family 52, riboflavin transporter, member 3 (469 aa).

Over 1–6 the chain is Cytoplasmic; the sequence is MALLTH. Residues 7 to 27 form a helical membrane-spanning segment; sequence LLVCTFGMGSWVAINGLWVEL. Topologically, residues 28 to 43 are extracellular; sequence PLLVTELPEGWYLPSY. The helical transmembrane segment at 44–64 threads the bilayer; that stretch reads LTMVIQLANIGPLLVTLLHHF. The Cytoplasmic portion of the chain corresponds to 65 to 71; it reads QPSCLSE. Residues 72–92 traverse the membrane as a helical segment; that stretch reads VPIIFTVLAVGTVACALFAFL. Topologically, residues 93-105 are extracellular; that stretch reads WNVTSWVLDGRHS. The N-linked (GlcNAc...) asparagine glycan is linked to Asn-94. The helical transmembrane segment at 106 to 126 threads the bilayer; the sequence is IAFMVLTFFLALVDCTSSVTF. Residues 127–137 are Cytoplasmic-facing; sequence LPFMSRLPACY. Residues 138-158 traverse the membrane as a helical segment; the sequence is LTTFFVGEGLSSLLPALVALA. Over 159–220 the chain is Extracellular; sequence QGSGLTTCVN…SRYLPANFSP (62 aa). A glycan (N-linked (GlcNAc...) asparagine) is linked at Asn-168. The helical transmembrane segment at 221–241 threads the bilayer; that stretch reads LVFFLLLSFMMACCLAAFFLL. The Cytoplasmic portion of the chain corresponds to 242–297; it reads QRQPRPRESSIEDLLTSQVTLHSIRPREGDDLGPPDPGPSSKAQGLPEEKTASDHP. Residue Ser-251 is modified to Phosphoserine. The interval 266 to 290 is disordered; the sequence is RPREGDDLGPPDPGPSSKAQGLPEE. The helical transmembrane segment at 298–318 threads the bilayer; it reads AHLAFIYVLVAFVNALTNGVL. The Extracellular segment spans residues 319-335; sequence PSVQTYSCLSYGPVAYH. Residues 336–356 form a helical membrane-spanning segment; sequence LSATLSSMANPLACFLSMFLP. Residues 357–361 lie on the Cytoplasmic side of the membrane; sequence HRSLP. Residues 362–382 traverse the membrane as a helical segment; sequence FLGVLTVLGTGFGAYNMAMAV. The Extracellular segment spans residues 383 to 396; it reads MSPCPLMQGHWAGE. A helical membrane pass occupies residues 397 to 417; sequence ILIVASWVLFIGCLSYVKVML. Residues 418 to 427 lie on the Cytoplasmic side of the membrane; it reads GVILRDRSRS. The helical transmembrane segment at 428–448 threads the bilayer; the sequence is ALVWCGAAVQLGSLLGALLMF. Residues 449–469 lie on the Extracellular side of the membrane; that stretch reads PLVNVLRLFSSADFCSLQCSA.

It belongs to the riboflavin transporter family.

Its subcellular location is the cell membrane. It carries out the reaction riboflavin(in) = riboflavin(out). Plasma membrane transporter mediating the uptake by cells of the water soluble vitamin B2/riboflavin that plays a key role in biochemical oxidation-reduction reactions of the carbohydrate, lipid, and amino acid metabolism. In Ailuropoda melanoleuca (Giant panda), this protein is Solute carrier family 52, riboflavin transporter, member 3 (SLC52A3).